We begin with the raw amino-acid sequence, 210 residues long: Holliday junction branch migration complex subunit RuvA (210 aa).

The domain I stretch occupies residues 1 to 64; it reads MIGLIEGRVC…EDAQLLYGFL (64 aa). A domain II region spans residues 65-143; that stretch reads HPTERDVFRQ…HIQSDMSLLT (79 aa). The segment at 144 to 154 is flexible linker; it reads EVEQQIGIAAN. A domain III region spans residues 155–210; it reads SEGVILAEVESALISLGYRDKEAQQAIKAARETDAGQQLVDTQSLLKLTLKQLSNF.

Belongs to the RuvA family. As to quaternary structure, homotetramer. Forms an RuvA(8)-RuvB(12)-Holliday junction (HJ) complex. HJ DNA is sandwiched between 2 RuvA tetramers; dsDNA enters through RuvA and exits via RuvB. An RuvB hexamer assembles on each DNA strand where it exits the tetramer. Each RuvB hexamer is contacted by two RuvA subunits (via domain III) on 2 adjacent RuvB subunits; this complex drives branch migration. In the full resolvosome a probable DNA-RuvA(4)-RuvB(12)-RuvC(2) complex forms which resolves the HJ.

It is found in the cytoplasm. Its function is as follows. The RuvA-RuvB-RuvC complex processes Holliday junction (HJ) DNA during genetic recombination and DNA repair, while the RuvA-RuvB complex plays an important role in the rescue of blocked DNA replication forks via replication fork reversal (RFR). RuvA specifically binds to HJ cruciform DNA, conferring on it an open structure. The RuvB hexamer acts as an ATP-dependent pump, pulling dsDNA into and through the RuvAB complex. HJ branch migration allows RuvC to scan DNA until it finds its consensus sequence, where it cleaves and resolves the cruciform DNA. The polypeptide is Holliday junction branch migration complex subunit RuvA (Psychrobacter sp. (strain PRwf-1)).